The sequence spans 189 residues: Peptidyl-tRNA hydrolase (189 aa).

Tyr15 lines the tRNA pocket. The active-site Proton acceptor is His20. Positions 66, 68, and 114 each coordinate tRNA.

Belongs to the PTH family. Monomer.

The protein localises to the cytoplasm. It carries out the reaction an N-acyl-L-alpha-aminoacyl-tRNA + H2O = an N-acyl-L-amino acid + a tRNA + H(+). In terms of biological role, hydrolyzes ribosome-free peptidyl-tRNAs (with 1 or more amino acids incorporated), which drop off the ribosome during protein synthesis, or as a result of ribosome stalling. Its function is as follows. Catalyzes the release of premature peptidyl moieties from peptidyl-tRNA molecules trapped in stalled 50S ribosomal subunits, and thus maintains levels of free tRNAs and 50S ribosomes. This Streptococcus pyogenes serotype M3 (strain ATCC BAA-595 / MGAS315) protein is Peptidyl-tRNA hydrolase.